The following is a 704-amino-acid chain: ATP-dependent zinc metalloprotease FtsH (704 aa).

The Cytoplasmic segment spans residues 1 to 17 (MADSAKTPRGKKRRPFT). A helical transmembrane segment spans residues 18-38 (GLALWIIVALLLGMAMFSLFG). Residues 39–127 (RDGYQQIDTQ…DEIASSSWWS (89 aa)) lie on the Extracellular side of the membrane. Residues 128 to 148 (TLLLSFLPLLIFIGLFWFLIM) form a helical membrane-spanning segment. The Cytoplasmic portion of the chain corresponds to 149–704 (NAQGGGKAMQ…GSAGTDGTGR (556 aa)). Position 217-224 (217-224 (GPPGTGKT)) interacts with ATP. His-439 contributes to the Zn(2+) binding site. Glu-440 is an active-site residue. Zn(2+)-binding residues include His-443 and Asp-515. Positions 624–704 (PREVWISSTE…GSAGTDGTGR (81 aa)) are disordered. A compositionally biased stretch (gly residues) spans 681 to 704 (PHGGEPGGGGYGYDGSAGTDGTGR).

It in the central section; belongs to the AAA ATPase family. In the C-terminal section; belongs to the peptidase M41 family. Homohexamer. It depends on Zn(2+) as a cofactor.

Its subcellular location is the cell membrane. In terms of biological role, acts as a processive, ATP-dependent zinc metallopeptidase for both cytoplasmic and membrane proteins. Plays a role in the quality control of integral membrane proteins. In Brachybacterium faecium (strain ATCC 43885 / DSM 4810 / JCM 11609 / LMG 19847 / NBRC 14762 / NCIMB 9860 / 6-10), this protein is ATP-dependent zinc metalloprotease FtsH.